A 657-amino-acid chain; its full sequence is tRNA 5-methylaminomethyl-2-thiouridine biosynthesis bifunctional protein MnmC (657 aa).

The interval 1–236 (MPDRLVPATL…KRAMLVGEYA (236 aa)) is tRNA (mnm(5)s(2)U34)-methyltransferase. Residues 261-657 (IGAGVAGCAV…LRARQVSAAD (397 aa)) are FAD-dependent cmnm(5)s(2)U34 oxidoreductase.

It in the N-terminal section; belongs to the methyltransferase superfamily. tRNA (mnm(5)s(2)U34)-methyltransferase family. This sequence in the C-terminal section; belongs to the DAO family. FAD is required as a cofactor.

The protein resides in the cytoplasm. It carries out the reaction 5-aminomethyl-2-thiouridine(34) in tRNA + S-adenosyl-L-methionine = 5-methylaminomethyl-2-thiouridine(34) in tRNA + S-adenosyl-L-homocysteine + H(+). In terms of biological role, catalyzes the last two steps in the biosynthesis of 5-methylaminomethyl-2-thiouridine (mnm(5)s(2)U) at the wobble position (U34) in tRNA. Catalyzes the FAD-dependent demodification of cmnm(5)s(2)U34 to nm(5)s(2)U34, followed by the transfer of a methyl group from S-adenosyl-L-methionine to nm(5)s(2)U34, to form mnm(5)s(2)U34. The chain is tRNA 5-methylaminomethyl-2-thiouridine biosynthesis bifunctional protein MnmC from Burkholderia multivorans (strain ATCC 17616 / 249).